We begin with the raw amino-acid sequence, 341 residues long: HTH-type transcriptional repressor PurR (341 aa).

Residues 2-56 (ATIKDVAKRAGVSTTTVSHVINKTRFVAENTRAAVWAAIKELNYSPSAVARSLKV) enclose the HTH lacI-type domain. Positions 4–23 (IKDVAKRAGVSTTTVSHVIN) form a DNA-binding region, H-T-H motif. The DNA-binding element occupies 48-56 (SAVARSLKV). Hypoxanthine contacts are provided by Tyr73, Arg190, Thr192, Phe221, and Asp275.

As to quaternary structure, homodimer.

It functions in the pathway purine metabolism; purine nucleotide biosynthesis [regulation]. In terms of biological role, is the main repressor of the genes involved in the de novo synthesis of purine nucleotides, regulating purB, purC, purEK, purF, purHD, purL, purMN and guaBA expression. PurR is allosterically activated to bind its cognate DNA by binding the purine corepressors, hypoxanthine or guanine, thereby effecting transcription repression. The polypeptide is HTH-type transcriptional repressor PurR (Proteus mirabilis (strain HI4320)).